The following is a 116-amino-acid chain: Flagellar transcriptional regulator FlhD (116 aa).

It belongs to the FlhD family. In terms of assembly, homodimer; disulfide-linked. Forms a heterohexamer composed of two FlhC and four FlhD subunits. Each FlhC binds a FlhD dimer, forming a heterotrimer, and a hexamer assembles by dimerization of two heterotrimers.

The protein localises to the cytoplasm. Functionally, functions in complex with FlhC as a master transcriptional regulator that regulates transcription of several flagellar and non-flagellar operons by binding to their promoter region. Activates expression of class 2 flagellar genes, including fliA, which is a flagellum-specific sigma factor that turns on the class 3 genes. Also regulates genes whose products function in a variety of physiological pathways. In Escherichia coli O9:H4 (strain HS), this protein is Flagellar transcriptional regulator FlhD.